Reading from the N-terminus, the 617-residue chain is Glutamine--fructose-6-phosphate aminotransferase [isomerizing] (617 aa).

Cysteine 2 acts as the Nucleophile; for GATase activity in catalysis. The region spanning 2 to 222 (CGIIGLAFAE…DGEFGWISPE (221 aa)) is the Glutamine amidotransferase type-2 domain. 2 consecutive SIS domains span residues 293–432 (AAGL…EAGR) and 466–607 (AASL…PDKP). Lysine 612 acts as the For Fru-6P isomerization activity in catalysis.

As to quaternary structure, homodimer.

Its subcellular location is the cytoplasm. It carries out the reaction D-fructose 6-phosphate + L-glutamine = D-glucosamine 6-phosphate + L-glutamate. Its function is as follows. Catalyzes the first step in hexosamine metabolism, converting fructose-6P into glucosamine-6P using glutamine as a nitrogen source. The chain is Glutamine--fructose-6-phosphate aminotransferase [isomerizing] from Aeropyrum pernix (strain ATCC 700893 / DSM 11879 / JCM 9820 / NBRC 100138 / K1).